The primary structure comprises 406 residues: Sorting nexin-6 (406 aa).

The residue at position 1 (Met-1) is an N-acetylmethionine. At Met-2 the chain carries N-acetylmethionine; in Sorting nexin-6, N-terminally processed. The segment at 2–179 (MEGLDDGPDF…NQDLSVRGKN (178 aa)) is interaction with PIM1. Residues 26 to 173 (LQSDAALQVD…HVFLEYNQDL (148 aa)) form the PX domain. A 1,2-diacyl-sn-glycero-3-phospho-(1D-myo-inositol-4,5-bisphosphate)-binding positions include 41-47 (SERDRVK), 100-106 (FDASREK), and 114-117 (EGSM). Ser-116 and Ser-194 each carry phosphoserine. The interval 182–199 (EKLEDFFKNMVKSADGVI) is membrane-binding amphipathic helix. One can recognise a BAR domain in the interval 203–406 (VKDVDDFFEH…NCLAVLNGDT (204 aa)).

It belongs to the sorting nexin family. As to quaternary structure, forms heterodimers with BAR domain-containing sorting nexins SNX1 and SNX2. The heterodimers are proposed to self-assemble into helical arrays on the membrane to stabilize and expand local membrane curvature underlying endosomal tubule formation. Thought to be a component of the originally described retromer complex (also called SNX-BAR retromer) which is a pentamer containing the heterotrimeric retromer cargo-selective complex (CSC), also described as vacuolar protein sorting subcomplex (VPS), and a heterodimeric membrane-deforming subcomplex formed between SNX1 or SNX2 and SNX5 or SNX6 (also called SNX-BAR subcomplex); the respective CSC and SNX-BAR subcomplexes associate with low affinity. Interacts with SNX1, SNX2, VPS26A, VPS29, VPS35, TGFB receptors, BACE1, BRMS1, PIP5K1C. Interacts with DCTN1; the association with DCTN1 is involved in movement of retromer-c ontaining vesicles toward the TGN. Interacts with PIM1; translocating SNX6 to the nucleus. Interacts with CDKN1B and GIT1. Post-translationally, in vitro phosphorylated by PIM1; not affecting PIM1-dependent nuclear translocation.

Its subcellular location is the early endosome membrane. It localises to the cytoplasmic vesicle. The protein localises to the cytoplasm. The protein resides in the nucleus. Involved in several stages of intracellular trafficking. Interacts with membranes phosphatidylinositol 3,4-bisphosphate and/or phosphatidylinositol 4,5-bisphosphate. Acts in part as component of the retromer membrane-deforming SNX-BAR subcomplex. The SNX-BAR retromer mediates retrograde transport of cargo proteins from endosomes to the trans-Golgi network (TGN) and is involved in endosome-to-plasma membrane transport for cargo protein recycling. The SNX-BAR subcomplex functions to deform the donor membrane into a tubular profile called endosome-to-TGN transport carrier (ETC). Does not have in vitro vesicle-to-membrane remodeling activity. Involved in retrograde endosome-to-TGN transport of lysosomal enzyme receptor IGF2R. May function as link between transport vesicles and dynactin. Negatively regulates retrograde transport of BACE1 from the cell surface to the trans-Golgi network. Involved in E-cadherin sorting and degradation; inhibits PIP5K1C-mediated E-cadherin degradation. In association with GIT1 involved in EGFR degradation. Promotes lysosomal degradation of CDKN1B. May contribute to transcription regulation. This chain is Sorting nexin-6 (Snx6), found in Mus musculus (Mouse).